Here is a 446-residue protein sequence, read N- to C-terminus: C-type lectin domain family 18 member A (446 aa).

Positions M1 to A26 are cleaved as a signal peptide. One can recognise an SCP domain in the interval L52–Y182. Residue N144 is glycosylated (N-linked (GlcNAc...) asparagine). The EGF-like domain occupies P228–Q261. Cystine bridges form between C236/C249, C251/C260, C327/C432, and C408/C424. Positions I306–Q433 constitute a C-type lectin domain.

In terms of processing, N-glycosylated. As to expression, dectected in all cell lines tested and in peripheral blood cells.

The protein localises to the secreted. It localises to the endoplasmic reticulum. Its subcellular location is the golgi apparatus. It is found in the endosome. In terms of biological role, binds polysaccharides in a Ca(2+)-independent manner with a preferentially binding to fucoidan, beta-glucans and galactans. The protein is C-type lectin domain family 18 member A (CLEC18A) of Homo sapiens (Human).